A 318-amino-acid polypeptide reads, in one-letter code: MFGVTLAELSASLGDPVLALGLAAFALLLLAIPISFWMVSGGSNSAVVTLLVALANLVLTAQLVLRWWQSGHFPISNLYESLCFLAWACTLAQLLVERSLSSPIVSAAATPMALLCVAFASFALPETLQEASPLVPALRSSWLVMHVSVIMCSYAALLVGSFLSMAVLFTDRQQTLELRSSSIGTGGFRQAKLATSSMDQSDGLRLSSINLSRTEQLDSLSYRTITVGFLLLTLGLISGAVWANEAWGSWWSWDPKETWALICWMVYAAYLHTRFSRGWSGRRPALVAVAGIVVIVVCYIGVNLLGIGLHSYGWFFEA.

8 helical membrane-spanning segments follow: residues 17-37, 45-65, 75-95, 104-124, 149-169, 224-244, 258-275, and 287-307; these read VLAL…ISFW, SAVV…QLVL, ISNL…AQLL, IVSA…SFAL, VIMC…AVLF, TITV…VWAN, TWAL…HTRF, and VAVA…LLGI.

This sequence belongs to the CcmF/CycK/Ccl1/NrfE/CcsA family. In terms of assembly, may interact with ccs1.

Its subcellular location is the cellular thylakoid membrane. Its function is as follows. Required during biogenesis of c-type cytochromes (cytochrome c6 and cytochrome f) at the step of heme attachment. The chain is Cytochrome c biogenesis protein CcsA from Prochlorococcus marinus (strain MIT 9313).